The primary structure comprises 214 residues: Adenylate kinase (214 aa).

Residue 10–15 (GAGKGT) coordinates ATP. Residues 30-59 (STGDMLRAAVKAGSELGKQAKAIMDAGKLV) are NMP. AMP contacts are provided by residues T31, R36, 57 to 59 (KLV), 85 to 88 (GFPR), and Q92. The LID stretch occupies residues 122–159 (GRRVHPGSGRVYHVKFNPPQVEGKDDVTGEDLMTRKDD). Residues R123 and 132 to 133 (VY) contribute to the ATP site. Positions 156 and 167 each coordinate AMP. Q200 provides a ligand contact to ATP.

It belongs to the adenylate kinase family. In terms of assembly, monomer.

The protein resides in the cytoplasm. The enzyme catalyses AMP + ATP = 2 ADP. It functions in the pathway purine metabolism; AMP biosynthesis via salvage pathway; AMP from ADP: step 1/1. Catalyzes the reversible transfer of the terminal phosphate group between ATP and AMP. Plays an important role in cellular energy homeostasis and in adenine nucleotide metabolism. The sequence is that of Adenylate kinase from Edwardsiella ictaluri (strain 93-146).